Reading from the N-terminus, the 337-residue chain is Heme A synthase (337 aa).

A run of 5 helical transmembrane segments spans residues 6 to 26 (ITKW…IGGI), 87 to 107 (FIHR…LIYF), 119 to 139 (LPYI…WYMV), 154 to 174 (LAFH…QLIK), and 192 to 212 (LIFS…GALV). Heme is bound at residue His256. The next 3 membrane-spanning stretches (helical) occupy residues 258 to 278 (LVGY…LKIE), 285 to 305 (IAYF…ITLL), and 308 to 328 (VPII…SIII). His316 contacts heme.

This sequence belongs to the COX15/CtaA family. Type 2 subfamily. Interacts with CtaB. It depends on heme b as a cofactor.

The protein localises to the cell membrane. It catalyses the reaction Fe(II)-heme o + 2 A + H2O = Fe(II)-heme a + 2 AH2. The protein operates within porphyrin-containing compound metabolism; heme A biosynthesis; heme A from heme O: step 1/1. Catalyzes the conversion of heme O to heme A by two successive hydroxylations of the methyl group at C8. The first hydroxylation forms heme I, the second hydroxylation results in an unstable dihydroxymethyl group, which spontaneously dehydrates, resulting in the formyl group of heme A. The chain is Heme A synthase from Rickettsia africae (strain ESF-5).